The chain runs to 344 residues: Phenylalanine--tRNA ligase alpha subunit (344 aa).

Mg(2+) is bound at residue Glu-261.

It belongs to the class-II aminoacyl-tRNA synthetase family. Phe-tRNA synthetase alpha subunit type 1 subfamily. Tetramer of two alpha and two beta subunits. The cofactor is Mg(2+).

It localises to the cytoplasm. It catalyses the reaction tRNA(Phe) + L-phenylalanine + ATP = L-phenylalanyl-tRNA(Phe) + AMP + diphosphate + H(+). This is Phenylalanine--tRNA ligase alpha subunit from Ehrlichia ruminantium (strain Gardel).